Here is a 298-residue protein sequence, read N- to C-terminus: dTDP-4-dehydrorhamnose reductase (298 aa).

NADH-binding positions include Gly10 to Val12, Asp35 to Leu36, and Ala59 to Thr61. NADPH contacts are provided by residues Gln11 to Val12, Asp35 to Leu36, Ala59 to Thr61, and Tyr98. Thr100–Asp101 is a binding site for dTDP-beta-L-rhamnose. Tyr124 and Lys128 together coordinate NADH. The NADPH site is built by Tyr124 and Lys128. Catalysis depends on Tyr124, which acts as the Proton donor/acceptor. DTDP-beta-L-rhamnose is bound at residue Trp149.

The protein belongs to the dTDP-4-dehydrorhamnose reductase family. In terms of assembly, homodimer. Mg(2+) is required as a cofactor.

It carries out the reaction dTDP-beta-L-rhamnose + NADP(+) = dTDP-4-dehydro-beta-L-rhamnose + NADPH + H(+). The protein operates within carbohydrate biosynthesis; dTDP-L-rhamnose biosynthesis. Its pathway is bacterial outer membrane biogenesis; LPS O-antigen biosynthesis. Its function is as follows. Involved in the biosynthesis of the dTDP-L-rhamnose which is an important component of lipopolysaccharide (LPS). Catalyzes the reduction of dTDP-6-deoxy-L-lyxo-4-hexulose to yield dTDP-L-rhamnose. The protein is dTDP-4-dehydrorhamnose reductase of Burkholderia thailandensis (strain ATCC 700388 / DSM 13276 / CCUG 48851 / CIP 106301 / E264).